An 809-amino-acid chain; its full sequence is Leucine--tRNA ligase (809 aa).

Positions 40–51 (PYPSGQGLHVGH) match the 'HIGH' region motif. The 'KMSKS' region motif lies at 581 to 585 (KMSKS). Lys584 contributes to the ATP binding site.

It belongs to the class-I aminoacyl-tRNA synthetase family.

Its subcellular location is the cytoplasm. The catalysed reaction is tRNA(Leu) + L-leucine + ATP = L-leucyl-tRNA(Leu) + AMP + diphosphate. This is Leucine--tRNA ligase from Levilactobacillus brevis (strain ATCC 367 / BCRC 12310 / CIP 105137 / JCM 1170 / LMG 11437 / NCIMB 947 / NCTC 947) (Lactobacillus brevis).